The sequence spans 751 residues: Methionine--tRNA ligase, cytoplasmic (751 aa).

An N-acetylserine modification is found at Ser-2. Residues 36 to 92 are interaction with ARC1; it reads LKPEVDNDNAAMELRNTKEPFLLFDANAILRYVMDDFEGQTSDKYQFALASLQNLLY. Positions 205–215 match the 'HIGH' region motif; it reads PYVNNVPHLGN. An ATP-binding site is contributed by Lys-411. The short motif at 525–529 is the 'KMSKS' region element; that stretch reads KFSKS.

It belongs to the class-I aminoacyl-tRNA synthetase family. As to quaternary structure, component of a yeast aminoacyl-tRNA synthase (aaRS) complex formed by methionyl-tRNA synthase MES1, glutamyl-tRNA synthase GUS1 and the tRNA aminoacylation cofactor ARC1 in a stoichiometric complex. Interacts (via N-ter) with ARC1 (via N-ter). Can also form a stable binary complex with ARC1 that is functional in terms of aminoacylation. ARC1 increases the affinity for cognate tRNAs due to the presence of a tRNA binding domain in the middle and C-terminal part of ARC1.

The protein resides in the cytoplasm. The catalysed reaction is tRNA(Met) + L-methionine + ATP = L-methionyl-tRNA(Met) + AMP + diphosphate. In terms of biological role, catalyzes the attachment of methionine to tRNA(Met) in a two-step reaction: methionine is first activated by ATP to form Met-AMP and then transferred to the acceptor end of tRNA(Met). This Saccharomyces cerevisiae (strain ATCC 204508 / S288c) (Baker's yeast) protein is Methionine--tRNA ligase, cytoplasmic (MES1).